Here is a 301-residue protein sequence, read N- to C-terminus: Probable alpha-L-glutamate ligase 2 (301 aa).

The 184-residue stretch at 104–287 (MQLLSRKGIG…VASMIIEFIV (184 aa)) folds into the ATP-grasp domain. ATP is bound by residues Lys-141, 178–179 (EY), Asp-187, and 211–213 (RSN). Mg(2+) is bound by residues Asp-248, Glu-260, and Asn-262. Residues Asp-248, Glu-260, and Asn-262 each coordinate Mn(2+).

The protein belongs to the RimK family. Requires Mg(2+) as cofactor. It depends on Mn(2+) as a cofactor.

This is Probable alpha-L-glutamate ligase 2 from Pseudoalteromonas atlantica (strain T6c / ATCC BAA-1087).